We begin with the raw amino-acid sequence, 134 residues long: Small ribosomal subunit protein uS8c (134 aa).

The protein belongs to the universal ribosomal protein uS8 family. In terms of assembly, part of the 30S ribosomal subunit.

Its subcellular location is the plastid. It is found in the chloroplast. In terms of biological role, one of the primary rRNA binding proteins, it binds directly to 16S rRNA central domain where it helps coordinate assembly of the platform of the 30S subunit. The sequence is that of Small ribosomal subunit protein uS8c (rps8) from Populus alba (White poplar).